The primary structure comprises 332 residues: Biotin synthase (332 aa).

Residues 53 to 283 (WGKGGVHACS…VHPRKTIKFA (231 aa)) enclose the Radical SAM core domain. [4Fe-4S] cluster-binding residues include C71, C75, and C78. [2Fe-2S] cluster-binding residues include C150, C211, and K281.

It belongs to the radical SAM superfamily. Biotin synthase family. In terms of assembly, homodimer. It depends on [4Fe-4S] cluster as a cofactor. Requires [2Fe-2S] cluster as cofactor.

It carries out the reaction (4R,5S)-dethiobiotin + (sulfur carrier)-SH + 2 reduced [2Fe-2S]-[ferredoxin] + 2 S-adenosyl-L-methionine = (sulfur carrier)-H + biotin + 2 5'-deoxyadenosine + 2 L-methionine + 2 oxidized [2Fe-2S]-[ferredoxin]. Its pathway is cofactor biosynthesis; biotin biosynthesis; biotin from 7,8-diaminononanoate: step 2/2. Catalyzes the conversion of dethiobiotin (DTB) to biotin by the insertion of a sulfur atom into dethiobiotin via a radical-based mechanism. In Chlorobium luteolum (strain DSM 273 / BCRC 81028 / 2530) (Pelodictyon luteolum), this protein is Biotin synthase.